The sequence spans 314 residues: Ribosomal RNA small subunit methyltransferase H (314 aa).

Residues 33 to 35, Asp52, Phe84, Asp105, and Gln112 contribute to the S-adenosyl-L-methionine site; that span reads GGH.

This sequence belongs to the methyltransferase superfamily. RsmH family.

The protein resides in the cytoplasm. It catalyses the reaction cytidine(1402) in 16S rRNA + S-adenosyl-L-methionine = N(4)-methylcytidine(1402) in 16S rRNA + S-adenosyl-L-homocysteine + H(+). Its function is as follows. Specifically methylates the N4 position of cytidine in position 1402 (C1402) of 16S rRNA. This is Ribosomal RNA small subunit methyltransferase H from Lactobacillus delbrueckii subsp. bulgaricus (strain ATCC 11842 / DSM 20081 / BCRC 10696 / JCM 1002 / NBRC 13953 / NCIMB 11778 / NCTC 12712 / WDCM 00102 / Lb 14).